A 102-amino-acid polypeptide reads, in one-letter code: Large ribosomal subunit protein bL21 (102 aa).

It belongs to the bacterial ribosomal protein bL21 family. In terms of assembly, part of the 50S ribosomal subunit. Contacts protein L20.

In terms of biological role, this protein binds to 23S rRNA in the presence of protein L20. This chain is Large ribosomal subunit protein bL21, found in Solidesulfovibrio magneticus (strain ATCC 700980 / DSM 13731 / RS-1) (Desulfovibrio magneticus).